The following is a 212-amino-acid chain: RING-H2 finger protein ATL68 (212 aa).

Residues 24–44 (LGLGYSIAIALGFLVLISTII) form a helical membrane-spanning segment. The RING-type; atypical zinc-finger motif lies at 136–178 (CSICLCEYMEEEMLRMMPECKHYFHVYCLDAWLKLNGSCPVCR). Residues 182–212 (LPTPQSTPQSTPLSEVVPLSQYAADRRRSRR) form a disordered region. Low complexity predominate over residues 185–195 (PQSTPQSTPLS).

The protein belongs to the RING-type zinc finger family. ATL subfamily.

It is found in the membrane. It catalyses the reaction S-ubiquitinyl-[E2 ubiquitin-conjugating enzyme]-L-cysteine + [acceptor protein]-L-lysine = [E2 ubiquitin-conjugating enzyme]-L-cysteine + N(6)-ubiquitinyl-[acceptor protein]-L-lysine.. It participates in protein modification; protein ubiquitination. This Arabidopsis thaliana (Mouse-ear cress) protein is RING-H2 finger protein ATL68 (ATL68).